The chain runs to 377 residues: Succinyl-diaminopimelate desuccinylase (377 aa).

A Zn(2+)-binding site is contributed by His-66. Asp-68 is a catalytic residue. Zn(2+) is bound at residue Asp-99. Glu-133 functions as the Proton acceptor in the catalytic mechanism. Positions 134, 162, and 348 each coordinate Zn(2+).

Belongs to the peptidase M20A family. DapE subfamily. In terms of assembly, homodimer. The cofactor is Zn(2+). Requires Co(2+) as cofactor.

The catalysed reaction is N-succinyl-(2S,6S)-2,6-diaminopimelate + H2O = (2S,6S)-2,6-diaminopimelate + succinate. It participates in amino-acid biosynthesis; L-lysine biosynthesis via DAP pathway; LL-2,6-diaminopimelate from (S)-tetrahydrodipicolinate (succinylase route): step 3/3. Its function is as follows. Catalyzes the hydrolysis of N-succinyl-L,L-diaminopimelic acid (SDAP), forming succinate and LL-2,6-diaminopimelate (DAP), an intermediate involved in the bacterial biosynthesis of lysine and meso-diaminopimelic acid, an essential component of bacterial cell walls. This is Succinyl-diaminopimelate desuccinylase from Histophilus somni (strain 2336) (Haemophilus somnus).